Consider the following 109-residue polypeptide: Thiosulfate sulfurtransferase GlpE (109 aa).

One can recognise a Rhodanese domain in the interval 16 to 104 (RSNGAVVVDI…WRATFPSETA (89 aa)). Residue Cys64 is the Cysteine persulfide intermediate of the active site.

Belongs to the GlpE family.

The protein resides in the cytoplasm. It carries out the reaction thiosulfate + hydrogen cyanide = thiocyanate + sulfite + 2 H(+). It catalyses the reaction thiosulfate + [thioredoxin]-dithiol = [thioredoxin]-disulfide + hydrogen sulfide + sulfite + 2 H(+). In terms of biological role, transferase that catalyzes the transfer of sulfur from thiosulfate to thiophilic acceptors such as cyanide or dithiols. May function in a CysM-independent thiosulfate assimilation pathway by catalyzing the conversion of thiosulfate to sulfite, which can then be used for L-cysteine biosynthesis. This chain is Thiosulfate sulfurtransferase GlpE, found in Ectopseudomonas mendocina (strain ymp) (Pseudomonas mendocina).